Here is a 365-residue protein sequence, read N- to C-terminus: Aminomethyltransferase (365 aa).

Belongs to the GcvT family. As to quaternary structure, the glycine cleavage system is composed of four proteins: P, T, L and H.

It catalyses the reaction N(6)-[(R)-S(8)-aminomethyldihydrolipoyl]-L-lysyl-[protein] + (6S)-5,6,7,8-tetrahydrofolate = N(6)-[(R)-dihydrolipoyl]-L-lysyl-[protein] + (6R)-5,10-methylene-5,6,7,8-tetrahydrofolate + NH4(+). Functionally, the glycine cleavage system catalyzes the degradation of glycine. The polypeptide is Aminomethyltransferase (Cronobacter sakazakii (strain ATCC BAA-894) (Enterobacter sakazakii)).